The sequence spans 705 residues: Ovotransferrin (705 aa).

A signal peptide spans methionine 1–alanine 19. Transferrin-like domains are found at residues isoleucine 26–lysine 352 and isoleucine 364–threonine 689. 2 disulfide bridges follow: cysteine 29/cysteine 64 and cysteine 39/cysteine 55. 2 residues coordinate Fe(3+): aspartate 79 and tyrosine 111. Disulfide bonds link cysteine 134–cysteine 216, cysteine 179–cysteine 193, cysteine 190–cysteine 201, and cysteine 247–cysteine 261. Hydrogencarbonate-binding residues include threonine 136, arginine 140, alanine 142, and glycine 143. Residue tyrosine 210 coordinates Fe(3+). Residue histidine 269 participates in Fe(3+) binding. Positions lysine 352–arginine 360 are connecting region. 2 cysteine pairs are disulfide-bonded: cysteine 367–cysteine 399 and cysteine 377–cysteine 390. The Fe(3+) site is built by aspartate 414 and tyrosine 450. Cystine bridges form between cysteine 424–cysteine 699, cysteine 440–cysteine 662, cysteine 473–cysteine 549, cysteine 497–cysteine 690, cysteine 507–cysteine 521, cysteine 518–cysteine 532, and cysteine 589–cysteine 603. Hydrogencarbonate contacts are provided by threonine 475, arginine 479, alanine 481, and glycine 482. N-linked (GlcNAc...) asparagine glycosylation occurs at asparagine 492. Tyrosine 543 contributes to the Fe(3+) binding site. A Fe(3+)-binding site is contributed by histidine 611.

It belongs to the transferrin family. Monomer. Different forms of hen transferrin are distinguished by their carbohydrate composition. Ovotransferrin and embryo serum transferrin but not adult serum transferrin, have bisecting N-acetylglucosamine. Transferrin secreted by embryo hepatocytes in primary culture is marked by the presence of (alpha1-6) fucosylation of the core N-acetylglucosamine. Serum transferrins also differ in the number of attached neuraminic acid residues. In both embryo forms, sialylation occurs on the Man (alpha 1-3)-linked antennae. In terms of tissue distribution, expressed in the magnum of the oviduct (at protein level).

The protein resides in the secreted. Transferrins are iron binding transport proteins which can bind two Fe(3+) ions in association with the binding of an anion, usually bicarbonate. Responsible for the transport of iron from sites of absorption and heme degradation to those of storage and utilization. There are two forms of hen transferrin, ovotransferrin, found in the ovoducts and, serum transferrin, secreted by the liver. Serum transferrin may also have a role in stimulating cell proliferation and is regulated by iron levels. Ovotransferrin has a bacteriostatic function and, is not controlled by iron levels. This is Ovotransferrin from Gallus gallus (Chicken).